An 81-amino-acid polypeptide reads, in one-letter code: Acyl carrier protein (81 aa).

The Carrier domain maps to 4–79 (SEILEKVKAI…DVLDFINNKV (76 aa)). Ser39 carries the O-(pantetheine 4'-phosphoryl)serine modification.

The protein belongs to the acyl carrier protein (ACP) family. 4'-phosphopantetheine is transferred from CoA to a specific serine of apo-ACP by AcpS. This modification is essential for activity because fatty acids are bound in thioester linkage to the sulfhydryl of the prosthetic group.

The protein localises to the cytoplasm. It functions in the pathway lipid metabolism; fatty acid biosynthesis. In terms of biological role, carrier of the growing fatty acid chain in fatty acid biosynthesis. This Thermosynechococcus vestitus (strain NIES-2133 / IAM M-273 / BP-1) protein is Acyl carrier protein.